Reading from the N-terminus, the 741-residue chain is Phage T7 exclusion protein (741 aa).

The region spanning 27–334 (FGNIAENISR…NSLIFLYPGM (308 aa)) is the KAP NTPase domain.

In terms of biological role, responsible for the exclusion of phage T7 by plasmid F. Growth of bacteriophage T7 is inhibited in cells of E.coli that carries the plasmid F. The polypeptide is Phage T7 exclusion protein (pifA) (Escherichia coli (strain K12)).